The following is a 348-amino-acid chain: ATPase GET3 (348 aa).

26-33 (KGGVGKTT) contributes to the ATP binding site. Residue Asp-57 is part of the active site. ATP contacts are provided by Glu-241 and Asn-268. Positions 280 and 283 each coordinate Zn(2+). 310–312 (PLL) lines the ATP pocket.

It belongs to the arsA ATPase family. As to quaternary structure, homodimer. Component of the Golgi to ER traffic (GET) complex, which is composed of GET1, GET2 and GET3. Within the complex, GET1 and GET2 form a heterotetramer which is stabilized by phosphatidylinositol binding and which binds to the GET3 homodimer. Interacts with the chloride channel protein GEF1.

The protein localises to the cytoplasm. Its subcellular location is the endoplasmic reticulum. It localises to the golgi apparatus. ATPase required for the post-translational delivery of tail-anchored (TA) proteins to the endoplasmic reticulum. Recognizes and selectively binds the transmembrane domain of TA proteins in the cytosol. This complex then targets to the endoplasmic reticulum by membrane-bound receptors GET1 and GET2, where the tail-anchored protein is released for insertion. This process is regulated by ATP binding and hydrolysis. ATP binding drives the homodimer towards the closed dimer state, facilitating recognition of newly synthesized TA membrane proteins. ATP hydrolysis is required for insertion. Subsequently, the homodimer reverts towards the open dimer state, lowering its affinity for the GET1-GET2 receptor, and returning it to the cytosol to initiate a new round of targeting. Cooperates with the HDEL receptor ERD2 to mediate the ATP-dependent retrieval of resident ER proteins that contain a C-terminal H-D-E-L retention signal from the Golgi to the ER. Involved in low-level resistance to the oxyanions arsenite and arsenate, and in heat tolerance. This chain is ATPase GET3, found in Debaryomyces hansenii (strain ATCC 36239 / CBS 767 / BCRC 21394 / JCM 1990 / NBRC 0083 / IGC 2968) (Yeast).